Here is a 141-residue protein sequence, read N- to C-terminus: VLSPADKTNIKSTWDKIGGHAGDYGGEALDRTFQSFPTTKTYFPHFDLSPGSAQVKAHGKKVADALTTAVAHLDDLPGALSALSDLHAYKLRVDPVNFKLLSHCLLVTLACHHPNEFTPAVHASLDKFFTAVSTVLTSKYR.

The Globin domain occupies 1-141 (VLSPADKTNI…VSTVLTSKYR (141 aa)). At serine 3 the chain carries Phosphoserine. Lysine 7 is subject to N6-succinyllysine. At threonine 8 the chain carries Phosphothreonine. The residue at position 11 (lysine 11) is an N6-succinyllysine. Lysine 16 carries the post-translational modification N6-acetyllysine; alternate. The residue at position 16 (lysine 16) is an N6-succinyllysine; alternate. Tyrosine 24 carries the phosphotyrosine modification. Phosphoserine is present on serine 35. Lysine 40 is subject to N6-succinyllysine. Serine 49 bears the Phosphoserine mark. Histidine 58 contributes to the O2 binding site. Histidine 87 is a heme b binding site. Serine 102 is subject to Phosphoserine. Threonine 108 carries the post-translational modification Phosphothreonine. Serine 124 carries the phosphoserine modification. Threonine 134 and threonine 137 each carry phosphothreonine. At serine 138 the chain carries Phosphoserine.

It belongs to the globin family. As to quaternary structure, heterotetramer of two alpha chains and two beta chains. Red blood cells.

Involved in oxygen transport from the lung to the various peripheral tissues. In terms of biological role, hemopressin acts as an antagonist peptide of the cannabinoid receptor CNR1. Hemopressin-binding efficiently blocks cannabinoid receptor CNR1 and subsequent signaling. This is Hemoglobin subunit alpha (HBA) from Vulpes vulpes (Red fox).